The sequence spans 406 residues: HEAT repeat-containing taxis protein OE_2401F (406 aa).

HEAT repeat units follow at residues Leu7–Glu41, Pro42–Leu78, Gly90–Ala127, Ile153–Leu184, Thr185–Phe215, Glu216–Pro252, and Val370–Thr406.

Interacts with chemotaxis (Che) proteins.

Involved in taxis signal transduction. Essential for the ability to control the direction of flagellar rotation. May have a role between CheY and the flagellum. The chain is HEAT repeat-containing taxis protein OE_2401F from Halobacterium salinarum (strain ATCC 29341 / DSM 671 / R1).